A 359-amino-acid chain; its full sequence is MTTLNLRKDAAPAPAFVSAAARFGVIEKPDLAFTPAVARETEHLYEKVKDFIPAFEWAAYAPYVHAINRLKKERNAVILAHNYQTPDIFHCVADIVGDSLQLARDATKVDAEIIIQCGVHFMAETSKLLNPEKTVLIPDARAGCSLSESITGADVRLLKERYPGVPVVTYVNTSADVKAETDICCTSSNVLAVVESLESDTVLCIPDEYLAMNVARETNKKILTWKGHCEVHERFTAAELLAYKEANPGIEIVGHPECHPDVIAVCDFSGSTSGMINYVKDKRPQRVLLVTECSMASNIQAEVKGVDFVKPCNLCPHMKRITLPKIFDSLLTMTEEVLVDPAIADRARLAVERMVNLKQ.

Iminosuccinate-binding residues include H81 and S99. C144 contacts [4Fe-4S] cluster. Residues 170-172 (YVN) and S187 contribute to the iminosuccinate site. C229 provides a ligand contact to [4Fe-4S] cluster. Iminosuccinate-binding positions include 255-257 (HPE) and T272. C315 contacts [4Fe-4S] cluster.

The protein belongs to the quinolinate synthase family. Type 2 subfamily. [4Fe-4S] cluster serves as cofactor.

Its subcellular location is the cytoplasm. It catalyses the reaction iminosuccinate + dihydroxyacetone phosphate = quinolinate + phosphate + 2 H2O + H(+). It functions in the pathway cofactor biosynthesis; NAD(+) biosynthesis; quinolinate from iminoaspartate: step 1/1. Its function is as follows. Catalyzes the condensation of iminoaspartate with dihydroxyacetone phosphate to form quinolinate. The protein is Quinolinate synthase of Sinorhizobium medicae (strain WSM419) (Ensifer medicae).